We begin with the raw amino-acid sequence, 277 residues long: Endochitinase CHI (277 aa).

The first 31 residues, 1-31 (MAKPTSRNDRFALFFITLIFLILTVSKPVAS), serve as a signal peptide directing secretion. Positions 32-66 (QNCGCASDFCCSKYGYCGTTDEFCGEGCQAGPCRS) constitute a Chitin-binding type-1 domain. Disulfide bonds link Cys34-Cys42, Cys36-Cys48, Cys41-Cys55, and Cys59-Cys64. The interval 75-277 (VSLEGTVTPD…GVAPGDNLTC (203 aa)) is catalytic. Glu136 (proton donor) is an active-site residue. Asn274 carries an N-linked (GlcNAc...) asparagine glycan.

It belongs to the glycosyl hydrolase 19 family. Chitinase class I subfamily.

It catalyses the reaction Random endo-hydrolysis of N-acetyl-beta-D-glucosaminide (1-&gt;4)-beta-linkages in chitin and chitodextrins.. This Arabidopsis thaliana (Mouse-ear cress) protein is Endochitinase CHI.